The sequence spans 278 residues: Orotidine 5'-phosphate decarboxylase (278 aa).

Substrate-binding positions include aspartate 40, 62–64 (KTH), 93–102 (DRKFADIGNT), tyrosine 223, and arginine 242. Lysine 95 acts as the Proton donor in catalysis.

This sequence belongs to the OMP decarboxylase family.

It catalyses the reaction orotidine 5'-phosphate + H(+) = UMP + CO2. Its pathway is pyrimidine metabolism; UMP biosynthesis via de novo pathway; UMP from orotate: step 2/2. The protein is Orotidine 5'-phosphate decarboxylase (URA1) of Schizophyllum commune (Split gill fungus).